Consider the following 562-residue polypeptide: Dihydroxy-acid dehydratase (562 aa).

C53 serves as a coordination point for [2Fe-2S] cluster. Residue D85 coordinates Mg(2+). Residue C126 coordinates [2Fe-2S] cluster. The Mg(2+) site is built by D127 and K128. Residue K128 is modified to N6-carboxylysine. C198 lines the [2Fe-2S] cluster pocket. E449 contributes to the Mg(2+) binding site. The active-site Proton acceptor is the S475.

Belongs to the IlvD/Edd family. In terms of assembly, homodimer. Requires [2Fe-2S] cluster as cofactor. Mg(2+) serves as cofactor.

It catalyses the reaction (2R)-2,3-dihydroxy-3-methylbutanoate = 3-methyl-2-oxobutanoate + H2O. It carries out the reaction (2R,3R)-2,3-dihydroxy-3-methylpentanoate = (S)-3-methyl-2-oxopentanoate + H2O. Its pathway is amino-acid biosynthesis; L-isoleucine biosynthesis; L-isoleucine from 2-oxobutanoate: step 3/4. It participates in amino-acid biosynthesis; L-valine biosynthesis; L-valine from pyruvate: step 3/4. Functionally, functions in the biosynthesis of branched-chain amino acids. Catalyzes the dehydration of (2R,3R)-2,3-dihydroxy-3-methylpentanoate (2,3-dihydroxy-3-methylvalerate) into 2-oxo-3-methylpentanoate (2-oxo-3-methylvalerate) and of (2R)-2,3-dihydroxy-3-methylbutanoate (2,3-dihydroxyisovalerate) into 2-oxo-3-methylbutanoate (2-oxoisovalerate), the penultimate precursor to L-isoleucine and L-valine, respectively. In Methylococcus capsulatus (strain ATCC 33009 / NCIMB 11132 / Bath), this protein is Dihydroxy-acid dehydratase.